The sequence spans 295 residues: MNETESEMQARLLAKALPFMQRYENKTIVVKYGGHAMGNPELGKAFASDIALLKQSGVNPIVVHGGGPQIGAMLSKMGIESKFEGGLRVTDQKTVEIVEMVLAGSINKEIVALINQTGEWAIGLCGKDGNMVFAEKARKTVKDPDSNIERVLDLGFVGEVVEVDRTLLDLLARSEMIPVIAPVAPGRDGATYNINADTFAGAIAGALNATRLLFLTDVPGVLDKNGQLIKELSVAEAHALIADGTISGGMIPKVETCIDAIKAGVQGVVILNGKTAHSVLLEIFTEHGVGTLIVP.

Substrate contacts are provided by residues 66–67 (GG), R88, and N193.

This sequence belongs to the acetylglutamate kinase family. ArgB subfamily.

It localises to the cytoplasm. It carries out the reaction N-acetyl-L-glutamate + ATP = N-acetyl-L-glutamyl 5-phosphate + ADP. The protein operates within amino-acid biosynthesis; L-arginine biosynthesis; N(2)-acetyl-L-ornithine from L-glutamate: step 2/4. Catalyzes the ATP-dependent phosphorylation of N-acetyl-L-glutamate. In Rhizobium johnstonii (strain DSM 114642 / LMG 32736 / 3841) (Rhizobium leguminosarum bv. viciae), this protein is Acetylglutamate kinase.